We begin with the raw amino-acid sequence, 225 residues long: Large ribosomal subunit protein mL58 (225 aa).

Positions 106-138 are disordered; that stretch reads PQAPITTPESSSTDAAAADQHGDLPPVLYNPTK. A compositionally biased stretch (polar residues) spans 109–119; sequence PITTPESSSTD.

This sequence belongs to the mitochondrion-specific ribosomal protein mL58 family. In terms of assembly, component of the mitochondrial large ribosomal subunit (mt-LSU). Mature N.crassa 74S mitochondrial ribosomes consist of a small (37S) and a large (54S) subunit. The 37S small subunit contains a 16S ribosomal RNA (16S mt-rRNA) and 32 different proteins. The 54S large subunit contains a 23S rRNA (23S mt-rRNA) and 42 different proteins.

It localises to the mitochondrion. Functionally, component of the mitochondrial ribosome (mitoribosome), a dedicated translation machinery responsible for the synthesis of mitochondrial genome-encoded proteins, including at least some of the essential transmembrane subunits of the mitochondrial respiratory chain. The mitoribosomes are attached to the mitochondrial inner membrane and translation products are cotranslationally integrated into the membrane. This is Large ribosomal subunit protein mL58 (mrpl20) from Neurospora crassa (strain ATCC 24698 / 74-OR23-1A / CBS 708.71 / DSM 1257 / FGSC 987).